Reading from the N-terminus, the 246-residue chain is Dihydromethanopterin reductase (acceptor) (246 aa).

2 consecutive 4Fe-4S ferredoxin-type domains span residues 150-178 (LPYA…VKRD) and 179-208 (NFVE…EGKE). [4Fe-4S] cluster contacts are provided by Cys-159, Cys-162, Cys-165, Cys-169, Cys-188, Cys-191, Cys-194, and Cys-198.

In terms of assembly, homodimer. It depends on [4Fe-4S] cluster as a cofactor.

The enzyme catalyses 5,6,7,8-tetrahydromethanopterin + A = 7,8-dihydromethanopterin + AH2. Its pathway is cofactor biosynthesis; 5,6,7,8-tetrahydromethanopterin biosynthesis. Functionally, involved in the biosynthesis of tetrahydromethanopterin, a coenzyme used in methanogenesis. Catalyzes the reduction of dihydromethanopterin (H(2)MPT) to tetrahydromethanopterin (H(4)MPT). Ferredoxin may serve as an electron donor. The polypeptide is Dihydromethanopterin reductase (acceptor) (Methanocaldococcus jannaschii (strain ATCC 43067 / DSM 2661 / JAL-1 / JCM 10045 / NBRC 100440) (Methanococcus jannaschii)).